The sequence spans 146 residues: MIRVRAVVYPGASFPEYQTLGSSGADLRAFLPGGPLEVHPLGRVLVPTGVCVELPVGLEMQIRPRSGLALEYGVTVLNSPGTIDADYRGEIRVLLVNLGLAAFVVSHGDRIAQAVISSVLRVEYVRSGSISLTERGKGGYGSTGVL.

Substrate contacts are provided by residues 65–67 (RSG), asparagine 78, and 82–84 (TID).

This sequence belongs to the dUTPase family. Mg(2+) is required as a cofactor.

It carries out the reaction dUTP + H2O = dUMP + diphosphate + H(+). Its pathway is pyrimidine metabolism; dUMP biosynthesis; dUMP from dCTP (dUTP route): step 2/2. Its function is as follows. This enzyme is involved in nucleotide metabolism: it produces dUMP, the immediate precursor of thymidine nucleotides and it decreases the intracellular concentration of dUTP so that uracil cannot be incorporated into DNA. This is Deoxyuridine 5'-triphosphate nucleotidohydrolase from Treponema pallidum subsp. pallidum (strain SS14).